We begin with the raw amino-acid sequence, 351 residues long: Protein FAM118B (351 aa).

Alanine 2 carries the N-acetylalanine modification. A Phosphoserine modification is found at serine 9.

It belongs to the FAM118 family.

The protein localises to the nucleus. It is found in the cajal body. In terms of biological role, may play a role in Cajal bodies formation. The polypeptide is Protein FAM118B (FAM118B) (Bos taurus (Bovine)).